The chain runs to 712 residues: Lactoperoxidase (712 aa).

The signal sequence occupies residues 1–22 (MWVCLQLPVFLASVTLFEVAAS). The propeptide occupies 23–100 (DTIAQAASTT…WEESLKRLRR (78 aa)). N-linked (GlcNAc...) asparagine glycosylation occurs at Asn-106. Disulfide bonds link Cys-123–Cys-284, Cys-132–Cys-145, Cys-246–Cys-256, and Cys-250–Cys-274. An N-linked (GlcNAc...) asparagine glycan is attached at Asn-212. Asp-225 provides a ligand contact to heme b. His-226 functions as the Proton acceptor in the catalytic mechanism. Asp-227 contacts Ca(2+). Thr-301, Phe-303, Asp-305, and Ser-307 together coordinate Ca(2+). A Phosphoserine modification is found at Ser-315. Asn-322 and Asn-358 each carry an N-linked (GlcNAc...) asparagine glycan. Cys-354 and Cys-365 form a disulfide bridge. Position 375 (Glu-375) interacts with heme b. N-linked (GlcNAc...) asparagine glycosylation is present at Asn-449. Position 468 (His-468) interacts with heme b. Tyr-482 carries the 3'-nitrotyrosine modification. 2 disulfides stabilise this stretch: Cys-573–Cys-630 and Cys-671–Cys-696.

It belongs to the peroxidase family. XPO subfamily. Ca(2+) serves as cofactor. It depends on heme b as a cofactor. As to expression, mammary gland; milk.

The protein resides in the secreted. It is found in the cytoplasm. It carries out the reaction 2 a phenolic donor + H2O2 = 2 a phenolic radical donor + 2 H2O. The catalysed reaction is thiocyanate + H2O2 + H(+) = hypothiocyanous acid + H2O. It catalyses the reaction iodide + H2O2 = hypoiodite + H2O. Heme-containing oxidoreductase which catalyzes the conversion of thiocyanate (SCN(-)) into antimicrobial agent hypothiocyanous acid (OSCN(-)) in the presence of hydrogen peroxide (H2O2). Also involved in the conversion of iodide (I(-)) into hypoiodite (IO(-)) in the presence of H2O2. Responsible for the inactivation of a wide range of micro-organisms and hence, important component of defense mechanism. The lactoperoxidase-SCN(-)-H2O2 system shows antibacterial properties against some streptococci strains. The lactoperoxidase-I(-)-H2O2 system shows antibacterial properties against E.coli. May protect the udder from infection and may promote growth in newborns. May be implicated in airway host defense against infection. May contribute to maintaining an appropriate H2O2 cellular level, therefore protecting cells from H2O2-caused injuries and inflammation. In Bos taurus (Bovine), this protein is Lactoperoxidase (LPO).